The sequence spans 289 residues: MPARASRPAPGLPARAGLGFKPEHYATLVEQPPDLGFFEIHAENYMVPGGPAHAQLAWLRERYAISVHGVGLSLGGHDPLDARLLAGHRQLQRRYAPDSISEHLAWSRHDGRYFNDLLPIVYDDAALRRVCAHIDQFQQCLGQPILLENPATYVRFEASHIDEAQFLCELVARTGCGLLLDVNNVYVSAVNHGFDARAYLARLPLAAVGEIHLAGHARQRDAHGRAVLIDSHDAPVDEAVWDLYEYTLALTGPVATLLERDGNIPPLAALLAETGRVAACLARGLALAA.

The protein belongs to the UPF0276 family.

This is UPF0276 protein BPP1075 from Bordetella parapertussis (strain 12822 / ATCC BAA-587 / NCTC 13253).